The primary structure comprises 350 residues: Serine-threonine kinase receptor-associated protein (350 aa).

WD repeat units lie at residues 12-56 (GHTR…GTFL), 57-96 (GHKG…ELMT), 98-137 (AHKH…AEPK), 141-179 (GHTS…EVKS), 180-212 (LNFN…HSAV), 221-262 (EAPA…ESYK), and 263-302 (GHFG…TYGL). Residues Ser312, Ser335, and Ser338 each carry the phosphoserine modification. Positions 326-350 (AEEELEEIASENSDSIYSSTPEVKA) are disordered. The segment covering 337-350 (NSDSIYSSTPEVKA) has biased composition (polar residues). The residue at position 342 (Tyr342) is a Phosphotyrosine.

Belongs to the WD repeat STRAP family. In terms of assembly, part of the core SMN complex that contains SMN1, GEMIN2/SIP1, DDX20/GEMIN3, GEMIN4, GEMIN5, GEMIN6, GEMIN7, GEMIN8 and STRAP/UNRIP. Part of the SMN-Sm complex that contains SMN1, GEMIN2/SIP1, DDX20/GEMIN3, GEMIN4, GEMIN5, GEMIN6, GEMIN7, GEMIN8, STRAP/UNRIP and the Sm proteins SNRPB, SNRPD1, SNRPD2, SNRPD3, SNRPE, SNRPF and SNRPG. Interacts directly with GEMIN6 and GEMIN7. Associates with the SMN complex in the cytoplasm but not in the nucleus. Also interacts with CSDE1/UNR and MAWBP. Interacts with PDPK1. Interacts with TRIM48.

It is found in the cytoplasm. It localises to the nucleus. In terms of biological role, the SMN complex catalyzes the assembly of small nuclear ribonucleoproteins (snRNPs), the building blocks of the spliceosome, and thereby plays an important role in the splicing of cellular pre-mRNAs. Most spliceosomal snRNPs contain a common set of Sm proteins SNRPB, SNRPD1, SNRPD2, SNRPD3, SNRPE, SNRPF and SNRPG that assemble in a heptameric protein ring on the Sm site of the small nuclear RNA to form the core snRNP (Sm core). In the cytosol, the Sm proteins SNRPD1, SNRPD2, SNRPE, SNRPF and SNRPG are trapped in an inactive 6S pICln-Sm complex by the chaperone CLNS1A that controls the assembly of the core snRNP. To assemble core snRNPs, the SMN complex accepts the trapped 5Sm proteins from CLNS1A forming an intermediate. Binding of snRNA inside 5Sm triggers eviction of the SMN complex, thereby allowing binding of SNRPD3 and SNRPB to complete assembly of the core snRNP. STRAP plays a role in the cellular distribution of the SMN complex. Negatively regulates TGF-beta signaling but positively regulates the PDPK1 kinase activity by enhancing its autophosphorylation and by significantly reducing the association of PDPK1 with 14-3-3 protein. This is Serine-threonine kinase receptor-associated protein (Strap) from Rattus norvegicus (Rat).